A 59-amino-acid chain; its full sequence is Lantibiotic lacticin 3147 A1 (59 aa).

Residues 1-29 (MNKNEIETQPVTWLEEVSDQNFDEDVFGA) constitute a propeptide that is removed on maturation. A cross-link (lanthionine (Cys-Ser)) is located at residues 30 to 31 (CS). 2,3-didehydrobutyrine occurs at positions 32 and 34. At Ser-36 the chain carries 2,3-didehydroalanine (Ser). Positions 38–48 (SDYWGNNGAWC) form a cross-link, lanthionine (Ser-Cys). 2 consecutive cross-links (beta-methyllanthionine (Thr-Cys)) follow at residues 49 to 54 (TLTHEC) and 51 to 58 (THECMAWC).

Maturation of lantibiotics involves the enzymatic conversion of Thr, and Ser into dehydrated AA and the formation of thioether bonds with cysteine. This is followed by membrane translocation and cleavage of the modified precursor. In terms of processing, it is not established whether the 2,3-didehydrobutyrines are the E- or Z-isomers. In the NMR model they were assumed to be the Z-isomer.

It is found in the secreted. Its function is as follows. Lanthionine-containing peptide antibiotic (lantibiotic) active on Gram-positive bacteria. The bactericidal activity of lantibiotics is based on depolarization of energized bacterial cytoplasmic membranes, initiated by the formation of aqueous transmembrane pores. When present individually lacticin 3147 A1 exhibits strong activity towards L.lactis strain AM2, weak activity towards L.lactis strain HP and no activity towards L.lactis strain IFPL359, but when combined with lacticin 3147 A2 it displays strong activity towards all three strains. In Lactococcus lactis subsp. lactis (Streptococcus lactis), this protein is Lantibiotic lacticin 3147 A1.